We begin with the raw amino-acid sequence, 61 residues long: MDPNCSCPTGGSCSCAGSCTCKACRCTSCKKSCCSCCPAGCARCAQGCICKGASDKCSCCA.

Met-1 is subject to N-acetylmethionine. The tract at residues 1–29 (MDPNCSCPTGGSCSCAGSCTCKACRCTSC) is beta. Positions 5, 7, 13, 15, 19, 21, 24, 26, 29, 33, 34, 36, 37, 41, 44, 48, 50, and 57 each coordinate a divalent metal cation. The tract at residues 30-61 (KKSCCSCCPAGCARCAQGCICKGASDKCSCCA) is alpha. A Phosphoserine modification is found at Ser-58. Residues Cys-59 and Cys-60 each coordinate a divalent metal cation.

Belongs to the metallothionein superfamily. Type 1 family. In terms of assembly, monomer.

Metallothioneins have a high content of cysteine residues that bind various heavy metals; these proteins are transcriptionally regulated by both heavy metals and glucocorticoids. The protein is Metallothionein-1A (MT1A) of Sus scrofa (Pig).